The chain runs to 135 residues: FK506-binding protein 2 (135 aa).

An N-terminal signal peptide occupies residues 1–17 (MLLKSLFLLFLTAIAFA). Positions 40–127 (GDLISVHYEG…VFVAELVDIA (88 aa)) constitute a PPIase FKBP-type domain. A Prevents secretion from ER motif is present at residues 132-135 (HDEL).

Belongs to the FKBP-type PPIase family. FKBP2 subfamily.

The protein resides in the endoplasmic reticulum. The catalysed reaction is [protein]-peptidylproline (omega=180) = [protein]-peptidylproline (omega=0). Inhibited by both FK506 and rapamycin. Its function is as follows. PPIases accelerate the folding of proteins. It catalyzes the cis-trans isomerization of proline imidic peptide bonds in oligopeptides. The polypeptide is FK506-binding protein 2 (FPR2) (Debaryomyces hansenii (strain ATCC 36239 / CBS 767 / BCRC 21394 / JCM 1990 / NBRC 0083 / IGC 2968) (Yeast)).